We begin with the raw amino-acid sequence, 153 residues long: Pheromone-binding protein Gp-9 (153 aa).

The signal sequence occupies residues 1–19; it reads MKTFVLHIFIFALVAFASA. Cystine bridges form between Cys-37/Cys-77, Cys-73/Cys-129, and Cys-118/Cys-138.

It belongs to the PBP/GOBP family. In terms of assembly, homodimer.

It localises to the secreted. Colony queen number, a major feature of social organization, is associated with worker genotype for Gp-9. Colonies are headed by either a single reproductive queen (monogyne form) or multiple queens (polygyne form). Differences in worker Gp-9 genotypes between social forms may cause differences in workers' abilities to recognize queens and regulate their numbers. The polypeptide is Pheromone-binding protein Gp-9 (Solenopsis daguerrei (Workerless parasitic ant)).